We begin with the raw amino-acid sequence, 201 residues long: Orotate phosphoribosyltransferase (201 aa).

113–121 serves as a coordination point for 5-phospho-alpha-D-ribose 1-diphosphate; it reads EDIITTGKS. Orotate-binding residues include Thr-117 and Arg-145.

Belongs to the purine/pyrimidine phosphoribosyltransferase family. PyrE subfamily. In terms of assembly, homodimer. It depends on Mg(2+) as a cofactor.

It catalyses the reaction orotidine 5'-phosphate + diphosphate = orotate + 5-phospho-alpha-D-ribose 1-diphosphate. The protein operates within pyrimidine metabolism; UMP biosynthesis via de novo pathway; UMP from orotate: step 1/2. Catalyzes the transfer of a ribosyl phosphate group from 5-phosphoribose 1-diphosphate to orotate, leading to the formation of orotidine monophosphate (OMP). In Helicobacter pylori (strain P12), this protein is Orotate phosphoribosyltransferase.